Here is a 471-residue protein sequence, read N- to C-terminus: Variant surface glycoprotein WRATAT A (471 aa).

The first 18 residues, 1-18 (MSVLFLLLAITRTASVKA), serve as a signal peptide directing secretion. 2 N-linked (GlcNAc...) asparagine glycosylation sites follow: Asn61 and Asn133. Positions 373 to 457 (QEQTLATTGT…ANTTGSSNSF (85 aa)) are disordered. The span at 379-392 (TTGTKSSSPQSTQQ) shows a compositional bias: low complexity. 2 disulfide bridges follow: Cys401-Cys414 and Cys410-Cys427. Over residues 401–447 (CNDKAKETECNSPCKWDKEEKDEKKRCKLSEEGKQAEKENQEGKDGK) the composition is skewed to basic and acidic residues. Positions 448-457 (ANTTGSSNSF) are enriched in polar residues. A glycan (N-linked (GlcNAc...) asparagine) is linked at Asn449. The GPI-anchor amidated serine moiety is linked to residue Ser454. A propeptide spans 455–471 (NSFVIKTSPLLLAVLLL) (removed in mature form).

The protein resides in the cell membrane. Functionally, VSG forms a coat on the surface of the parasite. The trypanosome evades the immune response of the host by expressing a series of antigenically distinct VSGs from an estimated 1000 VSG genes. The protein is Variant surface glycoprotein WRATAT A of Trypanosoma brucei rhodesiense.